The sequence spans 246 residues: Triosephosphate isomerase (246 aa).

Residue 9–11 participates in substrate binding; that stretch reads NWK. Residue histidine 95 is the Electrophile of the active site. The Proton acceptor role is filled by glutamate 165. Residues glycine 171, serine 210, and 231-232 contribute to the substrate site; that span reads GG.

It belongs to the triosephosphate isomerase family. As to quaternary structure, homodimer.

The protein resides in the cytoplasm. The catalysed reaction is D-glyceraldehyde 3-phosphate = dihydroxyacetone phosphate. It functions in the pathway carbohydrate biosynthesis; gluconeogenesis. Its pathway is carbohydrate degradation; glycolysis; D-glyceraldehyde 3-phosphate from glycerone phosphate: step 1/1. Its function is as follows. Involved in the gluconeogenesis. Catalyzes stereospecifically the conversion of dihydroxyacetone phosphate (DHAP) to D-glyceraldehyde-3-phosphate (G3P). The sequence is that of Triosephosphate isomerase from Thermodesulfovibrio yellowstonii (strain ATCC 51303 / DSM 11347 / YP87).